The sequence spans 210 residues: Large ribosomal subunit protein uL3 (210 aa).

Positions 126–167 are disordered; the sequence is WGFQRGPSGHGSKNIREPGSTGNATFPGRVIKGKKMPGQKGN. Residues 156–167 are compositionally biased toward basic residues; it reads IKGKKMPGQKGN.

Belongs to the universal ribosomal protein uL3 family. As to quaternary structure, part of the 50S ribosomal subunit. Forms a cluster with proteins L14 and L19.

Functionally, one of the primary rRNA binding proteins, it binds directly near the 3'-end of the 23S rRNA, where it nucleates assembly of the 50S subunit. The sequence is that of Large ribosomal subunit protein uL3 from Syntrophobacter fumaroxidans (strain DSM 10017 / MPOB).